We begin with the raw amino-acid sequence, 286 residues long: Energy-coupling factor transporter ATP-binding protein EcfA2 (286 aa).

The region spanning 3 to 246 is the ABC transporter domain; it reads IRFDNVSYTY…KEKLADWHIG (244 aa). 40 to 47 is an ATP binding site; sequence GQTGSGKS.

Belongs to the ABC transporter superfamily. Energy-coupling factor EcfA family. Forms a stable energy-coupling factor (ECF) transporter complex composed of 2 membrane-embedded substrate-binding proteins (S component), 2 ATP-binding proteins (A component) and 2 transmembrane proteins (T component).

It is found in the cell membrane. Its function is as follows. ATP-binding (A) component of a common energy-coupling factor (ECF) ABC-transporter complex. Unlike classic ABC transporters this ECF transporter provides the energy necessary to transport a number of different substrates. This Staphylococcus aureus (strain MRSA252) protein is Energy-coupling factor transporter ATP-binding protein EcfA2.